The following is a 593-amino-acid chain: Acetyl-coenzyme A transferase nodX (593 aa).

Positions 572-593 are disordered; it reads DEDEQGSGFRSGSGLGSGSIAD. The span at 580-593 shows a compositional bias: gly residues; the sequence is FRSGSGLGSGSIAD.

The protein belongs to the CoA-transferase III family.

It functions in the pathway secondary metabolite biosynthesis. Its function is as follows. Acetyl-coenzyme A transferase; part of the gene cluster that mediates the biosynthesis of the indole diterpenes nodulisporic acids (NA). Nodulisporic acid A (NAA) and its chemically modified derivatives are of particular significance because of their highly potent insecticidal activity against blood-feeding arthropods and lack of observable adverse effects on mammals, in particular the tremogenicity associated with the paspaline-derived IDTs is not observed. The geranylgeranyl diphosphate (GGPP) synthase ggs1, localized outside of the cluster, is proposed to catalyze the first step in nodulisporic acid biosynthesis via conversion of farnesyl pyrophosphate and isopentyl pyrophosphate into geranylgeranyl pyrophosphate (GGPP). Condensation of indole-3-glycerol phosphate with GGPP by the prenyl transferase nodC then forms 3-geranylgeranylindole (3-GGI). Epoxidation by the FAD-dependent monooxygenase nodM leads to a single-epoxidized-GGI that is substrate of the terpene cyclase nodB for cyclization to yield emindole SB. The terminal methyl carbon, C28, of emindole SB is then oxidized by the cytochrome P450 monooxygenase nodW to produce nodulisporic acid F (NAF), the pentacyclic core of NAA. NAF is converted to nodulisporic acid E (NAE) via prenylation. This step is probably performed by one of the indole diterpene prenyltransferases nodD1 or nodD2. Several oxidation steps performed by the FAD-linked oxidoreductase nodO and one of the cytochrome P450 monooxygenase nodR, nodX or nodZ further convert NAE to nodulisporic acid D (NAD). NAD is substrate of cytochrome P450 monooxygenase nodJ to produce the precursor of nodulisporic acid C (NAC), converted to NAC by one of the indole diterpene prenyltransferases nodD1 or nodD2. The FAD-dependent monooxygenase nodY2 then oxidizes NAC to nodulisporic acid B (NAB). Finally NAB is converted to NAA by one of the cytochrome P450 monooxygenases nodR, nodX or nodZ. This chain is Acetyl-coenzyme A transferase nodX, found in Hypoxylon pulicicidum.